Here is an 82-residue protein sequence, read N- to C-terminus: Small ribosomal subunit protein bS16 (82 aa).

Belongs to the bacterial ribosomal protein bS16 family.

The sequence is that of Small ribosomal subunit protein bS16 from Elusimicrobium minutum (strain Pei191).